The primary structure comprises 436 residues: GTPase Obg (436 aa).

The Obg domain maps to 2 to 160; that stretch reads SMFLDTAKVS…RELALELKIL (159 aa). One can recognise an OBG-type G domain in the interval 161–338; the sequence is ADVGLVGFPS…LLDATAQLLA (178 aa). GTP contacts are provided by residues 167-174, 192-196, 214-217, 284-287, and 319-321; these read GFPSVGKS, FTTIV, DLPG, NKMD, and SGI. S174 and T194 together coordinate Mg(2+). Positions 358 to 436 constitute an OCT domain; that stretch reads GFEEEEKAFD…IGKFEFEFVD (79 aa).

Belongs to the TRAFAC class OBG-HflX-like GTPase superfamily. OBG GTPase family. Monomer. Mg(2+) serves as cofactor.

The protein localises to the cytoplasm. In terms of biological role, an essential GTPase which binds GTP, GDP and possibly (p)ppGpp with moderate affinity, with high nucleotide exchange rates and a fairly low GTP hydrolysis rate. Plays a role in control of the cell cycle, stress response, ribosome biogenesis and in those bacteria that undergo differentiation, in morphogenesis control. The sequence is that of GTPase Obg from Streptococcus mutans serotype c (strain ATCC 700610 / UA159).